Here is a 257-residue protein sequence, read N- to C-terminus: NAD-capped RNA hydrolase NudC (257 aa).

Lys25 and Arg69 together coordinate substrate. Residues Cys98 and Cys101 each coordinate Zn(2+). Glu111 is a substrate binding site. 2 residues coordinate Zn(2+): Cys116 and Cys119. Tyr124 contacts substrate. Residues 125–248 (PQIAPCIIVA…TVARRLIEDT (124 aa)) enclose the Nudix hydrolase domain. A divalent metal cation-binding residues include Ala158, Glu174, and Glu178. The Nudix box signature appears at 159-180 (GFVEVGETLEQAVAREVMEESG). 192–199 (QPWPFPQS) serves as a coordination point for substrate. An a divalent metal cation-binding site is contributed by Glu219. A substrate-binding site is contributed by Ala241.

Belongs to the Nudix hydrolase family. NudC subfamily. As to quaternary structure, homodimer. Requires Mg(2+) as cofactor. The cofactor is Mn(2+). It depends on Zn(2+) as a cofactor.

It catalyses the reaction a 5'-end NAD(+)-phospho-ribonucleoside in mRNA + H2O = a 5'-end phospho-adenosine-phospho-ribonucleoside in mRNA + beta-nicotinamide D-ribonucleotide + 2 H(+). The enzyme catalyses NAD(+) + H2O = beta-nicotinamide D-ribonucleotide + AMP + 2 H(+). It carries out the reaction NADH + H2O = reduced beta-nicotinamide D-ribonucleotide + AMP + 2 H(+). Functionally, mRNA decapping enzyme that specifically removes the nicotinamide adenine dinucleotide (NAD) cap from a subset of mRNAs by hydrolyzing the diphosphate linkage to produce nicotinamide mononucleotide (NMN) and 5' monophosphate mRNA. The NAD-cap is present at the 5'-end of some mRNAs and stabilizes RNA against 5'-processing. Has preference for mRNAs with a 5'-end purine. Catalyzes the hydrolysis of a broad range of dinucleotide pyrophosphates. The chain is NAD-capped RNA hydrolase NudC from Shigella flexneri.